The sequence spans 131 residues: Antitoxin MqsA (131 aa).

Cysteine 3, cysteine 6, cysteine 37, and cysteine 40 together coordinate Zn(2+). The HTH cro/C1-type domain occupies 74 to 127 (IVKVRKKLSLTQKEASEIFGGGVNAFSRYEKGNAQPHPSTIKLLRVLDKHPELL). Residues 85–104 (QKEASEIFGGGVNAFSRYEK) constitute a DNA-binding region (H-T-H motif).

In terms of assembly, homodimer. Crystallizes as a heterotetramer with MqsA, MqsR-MqsA(2)-MqsR. Purifies as a probable heterohexamer of 2 MqsR dimers and 1 MqsA dimer. Binds promoter DNA as a dimer. When the 2 dissociate the MsqR mRNA interferase becomes active. Requires Zn(2+) as cofactor. Degraded in the presence of oxidative stress, maybe by the Lon and/or ClpX proteases.

Antitoxin component of a type II toxin-antitoxin (TA) system. Labile antitoxin that binds to the MqsR mRNA interferase toxin and neutralizes its endoribonuclease activity. Overexpression prevents MqsR-mediated cessation of cell growth and inhibition of cell proliferation. Initially reported to act as a cotranscription factor with MqsA. Following further experiments, the MqsR-MqsA complex does not bind DNA and all reported data are actually due to a small fraction of free MqsA alone binding DNA. Addition of MqsR to a preformed MqsA-promoter DNA complex causes dissociation of the MqsA-DNA complex, probably causing derepression of MqsA-repressed transcripts. MqsA binds to 2 palindromes in the promoter region of the mqsRA operon activating its transcription. Binds to other promoters, inducing mcbR and spy and repressing cspD among others. Binds to and represses the rpoS promoter, the master stress regulator, resulting in decreased cyclic-di-GMP, reduced stress resistance, increased cell motility and decreased biofilm formation; in these experiments 5 TA systems are missing (lacks MazEF, RelEB, ChpB, YoeB-YefM, YafQ-DinJ). An earlier study showed overexpression alone increases biofilm formation, perhaps by repressing cspD; in these experiments the 5 TA systems are present. Represses the csgD promoter. In the presence of stress, when this protein is degraded, the promoters it represses are derepressed, leading to biofilm formation. This TA system mediates cell growth during bile acid deoxycholate stress by degrading mRNA for probable deoxycholate-binding protein YgiS; bile acid detergents such as deoxycholate are important for host defense against bacterial growth in the gall bladder and duodenum. The protein is Antitoxin MqsA of Escherichia coli (strain K12).